The chain runs to 155 residues: Ribosomal RNA large subunit methyltransferase H (155 aa).

S-adenosyl-L-methionine-binding positions include glycine 104 and 123 to 128 (FGNITL).

Belongs to the RNA methyltransferase RlmH family. As to quaternary structure, homodimer.

The protein localises to the cytoplasm. It catalyses the reaction pseudouridine(1915) in 23S rRNA + S-adenosyl-L-methionine = N(3)-methylpseudouridine(1915) in 23S rRNA + S-adenosyl-L-homocysteine + H(+). Its function is as follows. Specifically methylates the pseudouridine at position 1915 (m3Psi1915) in 23S rRNA. The polypeptide is Ribosomal RNA large subunit methyltransferase H (Mesoplasma florum (strain ATCC 33453 / NBRC 100688 / NCTC 11704 / L1) (Acholeplasma florum)).